The following is a 429-amino-acid chain: UDP-N-acetylglucosamine 1-carboxyvinyltransferase (429 aa).

22 to 23 (KN) contributes to the phosphoenolpyruvate binding site. R102 contributes to the UDP-N-acetyl-alpha-D-glucosamine binding site. Catalysis depends on C126, which acts as the Proton donor. C126 is subject to 2-(S-cysteinyl)pyruvic acid O-phosphothioketal. Residues 131–135 (RPVDL), D316, and I338 each bind UDP-N-acetyl-alpha-D-glucosamine.

This sequence belongs to the EPSP synthase family. MurA subfamily.

The protein resides in the cytoplasm. The catalysed reaction is phosphoenolpyruvate + UDP-N-acetyl-alpha-D-glucosamine = UDP-N-acetyl-3-O-(1-carboxyvinyl)-alpha-D-glucosamine + phosphate. The protein operates within cell wall biogenesis; peptidoglycan biosynthesis. Its function is as follows. Cell wall formation. Adds enolpyruvyl to UDP-N-acetylglucosamine. The sequence is that of UDP-N-acetylglucosamine 1-carboxyvinyltransferase from Rhodopseudomonas palustris (strain BisB5).